The following is a 525-amino-acid chain: GMP synthase [glutamine-hydrolyzing] (525 aa).

A Glutamine amidotransferase type-1 domain is found at 9-207 (RILILDFGSQ…ILDICGCEAL (199 aa)). Catalysis depends on C86, which acts as the Nucleophile. Active-site residues include H181 and E183. One can recognise a GMPS ATP-PPase domain in the interval 208-400 (WTPSKIAEDA…LGLPYDMVYR (193 aa)). 235–241 (SGGVDSS) lines the ATP pocket.

In terms of assembly, homodimer.

The catalysed reaction is XMP + L-glutamine + ATP + H2O = GMP + L-glutamate + AMP + diphosphate + 2 H(+). Its pathway is purine metabolism; GMP biosynthesis; GMP from XMP (L-Gln route): step 1/1. Functionally, catalyzes the synthesis of GMP from XMP. The sequence is that of GMP synthase [glutamine-hydrolyzing] from Pseudomonas syringae pv. syringae (strain B728a).